A 320-amino-acid polypeptide reads, in one-letter code: mRNA decay activator protein ZFP36 (320 aa).

Residues 1–15 (MDLSAIYESLMSMSH) form a necessary for nuclear export region. The tract at residues 1-93 (MDLSAIYESL…PTSPTATPTT (93 aa)) is necessary and sufficient for the association with mRNA decay enzymes and mRNA decay activation. 2 necessary for localization of ARE-containing mRNAs to processing bodies (PBs) regions span residues 1–167 (MDLS…DLAL) and 93–320 (TSSR…SVSE). The segment at 17–50 (LSPDHGGTESSGGLWNINSSDSIPSGVTSRLTGR) is disordered. The segment covering 27 to 50 (SGGLWNINSSDSIPSGVTSRLTGR) has biased composition (polar residues). Serine 53 is subject to Phosphoserine; by MAPKAPK2. A Phosphoserine modification is found at serine 59. A P-P-P-P-G repeat occupies 64 to 68 (PPPPG). Pro residues predominate over residues 66–85 (PPGFAPLAPRPGPELSPSPT). The disordered stretch occupies residues 66 to 95 (PPGFAPLAPRPGPELSPSPTSPTATPTTSS). Phosphoserine occurs at positions 81 and 83. Threonine 85 carries the post-translational modification Phosphothreonine. The residue at position 86 (serine 86) is a Phosphoserine. Over residues 86-95 (SPTATPTTSS) the composition is skewed to low complexity. Residues 88–161 (TATPTTSSRY…GSRCHFIHNP (74 aa)) are necessary for nuclear localization. Residues 90–166 (TPTTSSRYKT…FIHNPTEDLA (77 aa)) are necessary for RNA-binding. 2 C3H1-type zinc fingers span residues 96–124 (RYKT…HGPG) and 134–162 (KYKT…HNPT). The tract at residues 96–187 (RYKTELCRTY…ISFSGLPSGR (92 aa)) is necessary for interaction with PABPN1. The segment at 167–320 (LPGQPHVLRQ…PIFNRISVSE (154 aa)) is necessary for mRNA decay activation. Serine 179 is subject to Phosphoserine; by MAPKAPK2. Residues 180–310 (FSGLPSGRRT…PQPPAPPRRL (131 aa)) are disordered. Serine 190 carries the post-translational modification Phosphoserine. The P-P-P-P-G repeat unit spans residues 191-195 (PPPPG). Low complexity predominate over residues 197 to 209 (SGPSLSSCSFSPS). A Phosphoserine modification is found at serine 211. The stretch at 212 to 216 (PPPPG) is one P-P-P-P-G repeat. Serine 221 carries the phosphoserine; by MAPK1; in vitro modification. Threonine 251 is subject to Phosphothreonine. Phosphoserine is present on residues serine 270 and serine 290. The segment covering 280 to 290 (SSGSSLGGSDS) has biased composition (low complexity). A compositionally biased stretch (pro residues) spans 300–309 (PPQPPAPPRR). Positions 306-320 (PPRRLPIFNRISVSE) are interaction with CNOT1. Serine 317 is modified (phosphoserine).

As to quaternary structure, associates with cytoplasmic CCR4-NOT and PAN2-PAN3 deadenylase complexes to trigger ARE-containing mRNA deadenylation and decay processes. Part of a mRNA decay activation complex at least composed of poly(A)-specific exoribonucleases CNOT6, EXOSC2 and XRN1 and mRNA-decapping enzymes DCP1A and DCP2. Associates with the RNA exosome complex. Interacts (via phosphorylated form) with 14-3-3 proteins; these interactions promote exclusion of ZFP36 from cytoplasmic stress granules in response to arsenite treatment in a MAPKAPK2-dependent manner and does not prevent CCR4-NOT deadenylase complex recruitment or ZFP36-induced ARE-containing mRNA deadenylation and decay processes. Interacts with 14-3-3 proteins; these interactions occur in response to rapamycin in an Akt-dependent manner. Interacts with AGO2 and AGO4. Interacts (via C-terminus) with CNOT1; this interaction occurs in a RNA-independent manner and induces mRNA deadenylation. Interacts (via N-terminus) with CNOT6. Interacts with CNOT6L. Interacts (via C-terminus) with CNOT7; this interaction occurs in a RNA-independent manner, induces mRNA deadenylation and is inhibited in a phosphorylation MAPKAPK2-dependent manner. Interacts (via unphosphorylated form) with CNOT8; this interaction occurs in a RNA-independent manner and is inhibited in a phosphorylation MAPKAPK2-dependent manner. Interacts with DCP1A. Interacts (via N-terminus) with DCP2. Interacts with EDC3. Interacts (via N-terminus) with EXOSC2. Interacts with heat shock 70 kDa proteins. Interacts with KHSRP; this interaction increases upon cytokine-induced treatment. Interacts with MAP3K4; this interaction enhances the association with SH3KBP1/CIN85. Interacts with MAPKAPK2; this interaction occurs upon skeletal muscle satellite cell activation. Interacts with NCL. Interacts with NUP214; this interaction increases upon lipopolysaccharide (LPS) stimulation. Interacts with PABPC1; this interaction occurs in a RNA-dependent manner. Interacts (via hypophosphorylated form) with PABPN1 (via RRM domain and C-terminal arginine-rich region); this interaction occurs in the nucleus in a RNA-independent manner, decreases in presence of single-stranded poly(A) RNA-oligomer and in a p38 MAPK-dependent-manner and inhibits nuclear poly(A) tail synthesis. Interacts with PAN2. Interacts (via C3H1-type zinc finger domains) with PKM. Interacts (via C3H1-type zinc finger domains) with nuclear RNA poly(A) polymerase. Interacts with PPP2CA; this interaction occurs in LPS-stimulated cells and induces ZFP36 dephosphorylation, and hence may promote ARE-containing mRNAs decay. Interacts (via C-terminus) with PRR5L (via C-terminus); this interaction may accelerate ZFP36-mediated mRNA decay during stress. Interacts (via C-terminus) with SFN; this interaction occurs in a phosphorylation-dependent manner. Interacts (via extreme C-terminal region) with SH3KBP1/CIN85 (via SH3 domains); this interaction enhances MAP3K4-induced phosphorylation of ZFP36 at Ser-59 and Ser-86 and does not alter neither ZFP36 binding to ARE-containing transcripts nor TNF-alpha mRNA decay. Interacts with XRN1. Interacts (via C-terminus and Ser-179 phosphorylated form) with YWHAB; this interaction occurs in a p38/MAPKAPK2-dependent manner, increases cytoplasmic localization of ZFP36 and protects ZFP36 from Ser-179 dephosphorylation by serine/threonine phosphatase 2A, and hence may be crucial for stabilizing ARE-containing mRNAs. Interacts (via phosphorylated form) with YWHAE. Interacts (via C-terminus) with YWHAG; this interaction occurs in a phosphorylation-dependent manner. Interacts with YWHAH; this interaction occurs in a phosphorylation-dependent manner. Interacts with YWHAQ; this interaction occurs in a phosphorylation-dependent manner. Interacts with (via C-terminus) YWHAZ; this interaction occurs in a phosphorylation-dependent manner. Does not interact with SH3KBP1. Interacts (via P-P-P-P-G repeats) with GIGYF2; the interaction is direct. Phosphorylated. Phosphorylation at serine and/or threonine residues occurs in a p38 MAPK- and MAPKAPK2-dependent manner. Phosphorylated by MAPKAPK2 at Ser-53 and Ser-179; phosphorylation increases its stability and cytoplasmic localization, promotes binding to 14-3-3 adapter proteins and inhibits the recruitment of cytoplasmic CCR4-NOT and PAN2-PAN3 deadenylase complexes to the mRNA decay machinery, thereby inhibiting ZFP36-induced ARE-containing mRNA deadenylation and decay processes. Phosphorylation by MAPKAPK2 does not impair ARE-containing RNA-binding. Phosphorylated in a MAPKAPK2- and p38 MAPK-dependent manner upon skeletal muscle satellite cell activation; this phosphorylation inhibits ZFP36-mediated mRNA decay activity, and hence stabilizes MYOD1 mRNA. Phosphorylated by MAPK1 upon mitogen stimulation. Phosphorylated at Ser-59 and Ser-86; these phosphorylations increase in a SH3KBP1-dependent manner. Phosphorylated at serine and threonine residues in a pyruvate kinase PKM- and p38 MAPK-dependent manner. Phosphorylation at Ser-53 may participate in the PKM-mediated degradation of ZFP36 in a p38 MAPK-dependent manner. Dephosphorylated by serine/threonine phosphatase 2A at Ser-179. Post-translationally, ubiquitinated; pyruvate kinase (PKM)-dependent ubiquitination leads to proteasomal degradation through a p38 MAPK signaling pathway.

The protein localises to the nucleus. Its subcellular location is the cytoplasm. The protein resides in the cytoplasmic granule. It localises to the P-body. Functionally, zinc-finger RNA-binding protein that destabilizes numerous cytoplasmic AU-rich element (ARE)-containing mRNA transcripts by promoting their poly(A) tail removal or deadenylation, and hence provide a mechanism for attenuating protein synthesis. Acts as an 3'-untranslated region (UTR) ARE mRNA-binding adapter protein to communicate signaling events to the mRNA decay machinery. Recruits deadenylase CNOT7 (and probably the CCR4-NOT complex) via association with CNOT1, and hence promotes ARE-mediated mRNA deadenylation. Also functions by recruiting components of the cytoplasmic RNA decay machinery to the bound ARE-containing mRNAs. Self regulates by destabilizing its own mRNA. Binds to 3'-UTR ARE of numerous mRNAs. Also binds to ARE of its own mRNA. Plays a role in anti-inflammatory responses; suppresses tumor necrosis factor (TNF)-alpha production by stimulating ARE-mediated TNF-alpha mRNA decay and several other inflammatory ARE-containing mRNAs in interferon (IFN)- and/or lipopolysaccharide (LPS)-induced macrophages. Also plays a role in the regulation of dendritic cell maturation at the post-transcriptional level, and hence operates as part of a negative feedback loop to limit the inflammatory response. Promotes ARE-mediated mRNA decay of hypoxia-inducible factor HIF1A mRNA during the response of endothelial cells to hypoxia. Positively regulates early adipogenesis of preadipocytes by promoting ARE-mediated mRNA decay of immediate early genes (IEGs). Negatively regulates hematopoietic/erythroid cell differentiation by promoting ARE-mediated mRNA decay of the transcription factor STAT5B mRNA. Plays a role in maintaining skeletal muscle satellite cell quiescence by promoting ARE-mediated mRNA decay of the myogenic determination factor MYOD1 mRNA. Also associates with and regulates the expression of non-ARE-containing target mRNAs at the post-transcriptional level, such as MHC class I mRNAs. Participates in association with argonaute RISC catalytic components in the ARE-mediated mRNA decay mechanism; assists microRNA (miRNA) targeting ARE-containing mRNAs. May also play a role in the regulation of cytoplasmic mRNA decapping; enhances decapping of ARE-containing RNAs, in vitro. Involved in the delivery of target ARE-mRNAs to processing bodies (PBs). In addition to its cytosolic mRNA-decay function, affects nuclear pre-mRNA processing. Negatively regulates nuclear poly(A)-binding protein PABPN1-stimulated polyadenylation activity on ARE-containing pre-mRNA during LPS-stimulated macrophages. Also involved in the regulation of stress granule (SG) and P-body (PB) formation and fusion. Plays a role in the regulation of keratinocyte proliferation, differentiation and apoptosis. Plays a role as a tumor suppressor by inhibiting cell proliferation in breast cancer cells. The protein is mRNA decay activator protein ZFP36 of Rattus norvegicus (Rat).